The following is a 460-amino-acid chain: Bifunctional protein GlmU (460 aa).

The interval 1 to 229 is pyrophosphorylase; it reads MTNYAIILAA…FNESLGVNDR (229 aa). Residues 8-11, lysine 22, glutamine 72, and 77-78 each bind UDP-N-acetyl-alpha-D-glucosamine; these read LAAG and GT. Residue aspartate 102 coordinates Mg(2+). UDP-N-acetyl-alpha-D-glucosamine contacts are provided by glycine 139, glutamate 154, asparagine 169, and asparagine 227. Residue asparagine 227 coordinates Mg(2+). The interval 230 to 250 is linker; it reads VALATAETVMRQRITQKHMVN. An N-acetyltransferase region spans residues 251–460; the sequence is GVTFQNPETV…RLAHHPSRSK (210 aa). Residues arginine 332 and lysine 350 each contribute to the UDP-N-acetyl-alpha-D-glucosamine site. Residue histidine 362 is the Proton acceptor of the active site. The UDP-N-acetyl-alpha-D-glucosamine site is built by tyrosine 365 and asparagine 376. Residues alanine 379, 385–386, serine 404, alanine 422, and arginine 439 contribute to the acetyl-CoA site; that span reads NY.

The protein in the N-terminal section; belongs to the N-acetylglucosamine-1-phosphate uridyltransferase family. In the C-terminal section; belongs to the transferase hexapeptide repeat family. Homotrimer. Mg(2+) serves as cofactor.

Its subcellular location is the cytoplasm. It carries out the reaction alpha-D-glucosamine 1-phosphate + acetyl-CoA = N-acetyl-alpha-D-glucosamine 1-phosphate + CoA + H(+). The enzyme catalyses N-acetyl-alpha-D-glucosamine 1-phosphate + UTP + H(+) = UDP-N-acetyl-alpha-D-glucosamine + diphosphate. It participates in nucleotide-sugar biosynthesis; UDP-N-acetyl-alpha-D-glucosamine biosynthesis; N-acetyl-alpha-D-glucosamine 1-phosphate from alpha-D-glucosamine 6-phosphate (route II): step 2/2. The protein operates within nucleotide-sugar biosynthesis; UDP-N-acetyl-alpha-D-glucosamine biosynthesis; UDP-N-acetyl-alpha-D-glucosamine from N-acetyl-alpha-D-glucosamine 1-phosphate: step 1/1. It functions in the pathway bacterial outer membrane biogenesis; LPS lipid A biosynthesis. Catalyzes the last two sequential reactions in the de novo biosynthetic pathway for UDP-N-acetylglucosamine (UDP-GlcNAc). The C-terminal domain catalyzes the transfer of acetyl group from acetyl coenzyme A to glucosamine-1-phosphate (GlcN-1-P) to produce N-acetylglucosamine-1-phosphate (GlcNAc-1-P), which is converted into UDP-GlcNAc by the transfer of uridine 5-monophosphate (from uridine 5-triphosphate), a reaction catalyzed by the N-terminal domain. This Streptococcus pyogenes serotype M6 (strain ATCC BAA-946 / MGAS10394) protein is Bifunctional protein GlmU.